Reading from the N-terminus, the 133-residue chain is Ribosomal RNA large subunit methyltransferase H 1 (133 aa).

S-adenosyl-L-methionine is bound by residues isoleucine 55, glycine 89, and 101–106 (ISPMEM).

This sequence belongs to the RNA methyltransferase RlmH family. As to quaternary structure, homodimer.

Its subcellular location is the cytoplasm. It catalyses the reaction pseudouridine(1915) in 23S rRNA + S-adenosyl-L-methionine = N(3)-methylpseudouridine(1915) in 23S rRNA + S-adenosyl-L-homocysteine + H(+). Functionally, specifically methylates the pseudouridine at position 1915 (m3Psi1915) in 23S rRNA. This chain is Ribosomal RNA large subunit methyltransferase H 1, found in Thermoanaerobacter sp. (strain X514).